A 211-amino-acid chain; its full sequence is ATP phosphoribosyltransferase (211 aa).

It belongs to the ATP phosphoribosyltransferase family. Short subfamily. Heteromultimer composed of HisG and HisZ subunits.

It is found in the cytoplasm. It carries out the reaction 1-(5-phospho-beta-D-ribosyl)-ATP + diphosphate = 5-phospho-alpha-D-ribose 1-diphosphate + ATP. The protein operates within amino-acid biosynthesis; L-histidine biosynthesis; L-histidine from 5-phospho-alpha-D-ribose 1-diphosphate: step 1/9. Its function is as follows. Catalyzes the condensation of ATP and 5-phosphoribose 1-diphosphate to form N'-(5'-phosphoribosyl)-ATP (PR-ATP). Has a crucial role in the pathway because the rate of histidine biosynthesis seems to be controlled primarily by regulation of HisG enzymatic activity. The polypeptide is ATP phosphoribosyltransferase (Pseudomonas putida (strain ATCC 47054 / DSM 6125 / CFBP 8728 / NCIMB 11950 / KT2440)).